The primary structure comprises 164 residues: FMN reductase (NADH) RutF (164 aa).

Belongs to the non-flavoprotein flavin reductase family. RutF subfamily.

The enzyme catalyses FMNH2 + NAD(+) = FMN + NADH + 2 H(+). In terms of biological role, catalyzes the reduction of FMN to FMNH2 which is used to reduce pyrimidine by RutA via the Rut pathway. The chain is FMN reductase (NADH) RutF from Escherichia coli O81 (strain ED1a).